A 514-amino-acid chain; its full sequence is Na(+)/H(+) antiporter NhaB (514 aa).

12 consecutive transmembrane segments (helical) span residues 23–43, 63–83, 97–117, 120–140, 144–164, 202–222, 238–258, 303–323, 357–377, 391–411, 447–467, and 475–495; these read LALL…PFIA, PLLP…TSAA, LLLM…LFIF, LLLS…AAAF, FLDA…FYGI, LMMH…VGEP, FFLR…LTCM, AVIG…VGLI, LTVF…APII, LFYL…VGTI, ATPN…APLI, and VWMA…CVEF.

The protein belongs to the NhaB Na(+)/H(+) (TC 2.A.34) antiporter family.

The protein localises to the cell inner membrane. It carries out the reaction 2 Na(+)(in) + 3 H(+)(out) = 2 Na(+)(out) + 3 H(+)(in). In terms of biological role, na(+)/H(+) antiporter that extrudes sodium in exchange for external protons. This is Na(+)/H(+) antiporter NhaB from Salmonella newport (strain SL254).